The primary structure comprises 488 residues: Wax ester synthase/diacylglycerol acyltransferase 8 (488 aa).

The Cytoplasmic segment spans residues 1 to 195; sequence MKNEEEEPLS…AIFTIGSTMR (195 aa). His-135 (proton acceptor) is an active-site residue. A helical transmembrane segment spans residues 196–214; that stretch reads LIWNTLVDMFLLFATMLFL. The Lumenal segment spans residues 215–488; it reads KDTKTPLKGG…RGLLKEAYKV (274 aa). N-linked (GlcNAc...) asparagine glycosylation is found at Asn-238, Asn-252, Asn-353, and Asn-397.

It in the N-terminal section; belongs to the long-chain O-acyltransferase family. In terms of tissue distribution, mostly expressed in flowers and siliques and at low levels in stems.

Its subcellular location is the cell membrane. It localises to the endoplasmic reticulum membrane. The catalysed reaction is an acyl-CoA + a 1,2-diacyl-sn-glycerol = a triacyl-sn-glycerol + CoA. It carries out the reaction a long chain fatty alcohol + a fatty acyl-CoA = a wax ester + CoA. The protein operates within glycerolipid metabolism; triacylglycerol biosynthesis. It participates in lipid metabolism. Functionally, bifunctional wax ester synthase/diacylglycerol acyltransferase. Involved in cuticular wax biosynthesis. The chain is Wax ester synthase/diacylglycerol acyltransferase 8 from Arabidopsis thaliana (Mouse-ear cress).